The following is a 345-amino-acid chain: Fe(3+) ions import ATP-binding protein FbpC (345 aa).

Residues 4-236 (LELHGIGKSY…PVDEPTASFL (233 aa)) enclose the ABC transporter domain. 36–43 (GPSGSGKT) contacts ATP.

Belongs to the ABC transporter superfamily. Fe(3+) ion importer (TC 3.A.1.10) family. In terms of assembly, the complex is composed of two ATP-binding proteins (FbpC), two transmembrane proteins (FbpB) and a solute-binding protein (FbpA).

The protein resides in the cell inner membrane. The enzyme catalyses Fe(3+)(out) + ATP + H2O = Fe(3+)(in) + ADP + phosphate + H(+). Its function is as follows. Part of the ABC transporter complex FbpABC involved in Fe(3+) ions import. Responsible for energy coupling to the transport system. The protein is Fe(3+) ions import ATP-binding protein FbpC of Serratia marcescens.